We begin with the raw amino-acid sequence, 103 residues long: uncharacterized protein (103 aa).

This is an uncharacterized protein from Acanthamoeba polyphaga (Amoeba).